A 343-amino-acid chain; its full sequence is Uroporphyrinogen decarboxylase (343 aa).

Substrate-binding positions include 21 to 25 (RQAGR), aspartate 71, tyrosine 148, serine 203, and histidine 316.

Belongs to the uroporphyrinogen decarboxylase family. In terms of assembly, homodimer.

Its subcellular location is the cytoplasm. It catalyses the reaction uroporphyrinogen III + 4 H(+) = coproporphyrinogen III + 4 CO2. It functions in the pathway porphyrin-containing compound metabolism; protoporphyrin-IX biosynthesis; coproporphyrinogen-III from 5-aminolevulinate: step 4/4. Its function is as follows. Catalyzes the decarboxylation of four acetate groups of uroporphyrinogen-III to yield coproporphyrinogen-III. In Campylobacter fetus subsp. fetus (strain 82-40), this protein is Uroporphyrinogen decarboxylase.